Reading from the N-terminus, the 285-residue chain is Alpha-acetolactate decarboxylase (285 aa).

The signal sequence occupies residues 1–25 (MKKNIITSITSLALVAGLSLTAFAA).

This sequence belongs to the alpha-acetolactate decarboxylase family.

It catalyses the reaction (2S)-2-acetolactate + H(+) = (R)-acetoin + CO2. Its pathway is polyol metabolism; (R,R)-butane-2,3-diol biosynthesis; (R,R)-butane-2,3-diol from pyruvate: step 2/3. In terms of biological role, converts acetolactate into acetoin, which can be excreted by the cells. This may be a mechanism for controlling the internal pH of cells in the stationary stage. This chain is Alpha-acetolactate decarboxylase (aldB), found in Brevibacillus brevis (Bacillus brevis).